A 240-amino-acid chain; its full sequence is Phosphoribosylaminoimidazole-succinocarboxamide synthase (240 aa).

It belongs to the SAICAR synthetase family.

The enzyme catalyses 5-amino-1-(5-phospho-D-ribosyl)imidazole-4-carboxylate + L-aspartate + ATP = (2S)-2-[5-amino-1-(5-phospho-beta-D-ribosyl)imidazole-4-carboxamido]succinate + ADP + phosphate + 2 H(+). It functions in the pathway purine metabolism; IMP biosynthesis via de novo pathway; 5-amino-1-(5-phospho-D-ribosyl)imidazole-4-carboxamide from 5-amino-1-(5-phospho-D-ribosyl)imidazole-4-carboxylate: step 1/2. In Wolbachia pipientis wMel, this protein is Phosphoribosylaminoimidazole-succinocarboxamide synthase.